A 114-amino-acid chain; its full sequence is Putative membrane protein insertion efficiency factor (114 aa).

The protein belongs to the UPF0161 family.

It is found in the cell inner membrane. Functionally, could be involved in insertion of integral membrane proteins into the membrane. The sequence is that of Putative membrane protein insertion efficiency factor from Nitrobacter hamburgensis (strain DSM 10229 / NCIMB 13809 / X14).